The sequence spans 525 residues: Phosphoenolpyruvate carboxykinase (ATP) 1 (525 aa).

Substrate is bound by residues Arg-55, Tyr-190, and Lys-196. ATP is bound by residues Lys-196, His-215, and 231–239 (GLSGTGKTT). Residues Lys-196 and His-215 each coordinate Mn(2+). Mn(2+) is bound at residue Asp-252. ATP-binding residues include Glu-280, Arg-317, and Thr-442. Arg-317 is a substrate binding site.

This sequence belongs to the phosphoenolpyruvate carboxykinase (ATP) family. Mn(2+) serves as cofactor.

It localises to the cytoplasm. The enzyme catalyses oxaloacetate + ATP = phosphoenolpyruvate + ADP + CO2. It functions in the pathway carbohydrate biosynthesis; gluconeogenesis. Functionally, involved in the gluconeogenesis. Catalyzes the conversion of oxaloacetate (OAA) to phosphoenolpyruvate (PEP) through direct phosphoryl transfer between the nucleoside triphosphate and OAA. The chain is Phosphoenolpyruvate carboxykinase (ATP) 1 from Moorella thermoacetica (strain ATCC 39073 / JCM 9320).